A 152-amino-acid polypeptide reads, in one-letter code: Ribonuclease pancreatic gamma-type (152 aa).

The first 25 residues, Met1 to Val25, serve as a signal peptide directing secretion. The disordered stretch occupies residues Gly26–Gln48. Over residues Glu27–Glu43 the composition is skewed to basic and acidic residues. Lys35 and Arg38 together coordinate substrate. His40 functions as the Proton acceptor in the catalytic mechanism. 4 disulfides stabilise this stretch: Cys54/Cys112, Cys68/Cys123, Cys86/Cys138, and Cys93/Cys100. Residues Lys69 to Thr73 and Lys94 each bind substrate. The active-site Proton donor is the His147.

The protein belongs to the pancreatic ribonuclease family. Monomer.

The protein localises to the secreted. It carries out the reaction an [RNA] containing cytidine + H2O = an [RNA]-3'-cytidine-3'-phosphate + a 5'-hydroxy-ribonucleotide-3'-[RNA].. It catalyses the reaction an [RNA] containing uridine + H2O = an [RNA]-3'-uridine-3'-phosphate + a 5'-hydroxy-ribonucleotide-3'-[RNA].. Functionally, endonuclease that catalyzes the cleavage of RNA on the 3' side of pyrimidine nucleotides. Acts on single-stranded and double-stranded RNA. The chain is Ribonuclease pancreatic gamma-type from Rattus fuscipes (Bush rat).